Consider the following 604-residue polypeptide: Zinc finger protein chinmo (604 aa).

Residues 32–98 (ADVILSCDGV…MYKGEVHVSQ (67 aa)) form the BTB domain. Disordered stretches follow at residues 122–155 (RLAA…SGGS), 291–310 (CDSL…GYTH), 330–437 (RSPY…DEST), and 450–470 (NLKY…TPNT). Residues 364–374 (PSSSASSTAPT) show a composition bias toward low complexity. A compositionally biased stretch (polar residues) spans 384–409 (ASPQSSRYENHSPSTTAGNGNATSSL). The segment covering 425 to 437 (ANDDDRELMDEST) has biased composition (acidic residues). Positions 461–470 (SNTSSTTPNT) are enriched in low complexity. 2 consecutive C2H2-type zinc fingers follow at residues 517–540 (LKCL…RQRH) and 545–568 (VPCP…AREH).

In terms of tissue distribution, broadly expressed in the developing larval central nervous system (at protein level). Expressed in the larval lymph gland and circulating hemocytes (at protein level). Expressed in all cell types of the adult testis stem cell niche but not detected in somatic cells of the adult ovary (at protein level). In the testis, expressed at high levels in cyst stem cells and early cyst cells and, at lower levels, in germline stem cells (at protein level).

The protein localises to the nucleus. In terms of biological role, required for morphological differentiation of postmitotic neurons during postembryonic brain development. Ensures production of appropriate neuron subtypes within a lineage by preventing precocious generation of late neuronal types of that lineage. Acts as a downstream mediator of the transcriptional activator Stat92e and is required for the development of the eye-antennal disk which gives rise to the adult eye, antenna and head capsule, for transcriptional repression of the Notch receptor ligand Ser and for the self-renewal of cyst stem cells in the testis. In the adult testis, maintains the male identify of adult somatic cyst stem cells. Represses expression and alternative splicing of transformer pre-mRNA, resulting in the production of the male-specific isoform of transcription factor dsx which ensures male-specific transcription of target genes. Plays a role in actin nuclear localization through its involvement in repressing the expression of the kinase Cdi. This maintains the cofilin/actin-depolymerizing factor homolog tsr in its unphosphorylated state which is required for actin nuclear import. This Drosophila melanogaster (Fruit fly) protein is Zinc finger protein chinmo.